A 311-amino-acid polypeptide reads, in one-letter code: Cytochrome f (311 aa).

Residues 1 to 27 (MKHFFKSLTLAIALAASVLFWSPQAQA) form the signal peptide. The heme site is built by Tyr-28, Cys-48, Cys-51, and His-52. Residues 279 to 296 (WLLVFFAAITLSQILLVL) traverse the membrane as a helical segment.

The protein belongs to the cytochrome f family. The 4 large subunits of the cytochrome b6-f complex are cytochrome b6, subunit IV (17 kDa polypeptide, PetD), cytochrome f and the Rieske protein, while the 4 small subunits are PetG, PetL, PetM and PetN. The complex functions as a dimer. The cofactor is heme.

The protein resides in the cellular thylakoid membrane. Functionally, component of the cytochrome b6-f complex, which mediates electron transfer between photosystem II (PSII) and photosystem I (PSI), cyclic electron flow around PSI, and state transitions. The sequence is that of Cytochrome f from Synechococcus elongatus.